Here is a 427-residue protein sequence, read N- to C-terminus: Peptidase B (427 aa).

Positions 195 and 200 each coordinate Mn(2+). Lysine 207 is an active-site residue. Mn(2+) is bound by residues aspartate 218, aspartate 277, and glutamate 279. Residue arginine 281 is part of the active site.

The protein belongs to the peptidase M17 family. In terms of assembly, homohexamer. Mn(2+) serves as cofactor.

It localises to the cytoplasm. It carries out the reaction Release of an N-terminal amino acid, Xaa, from a peptide or arylamide. Xaa is preferably Glu or Asp but may be other amino acids, including Leu, Met, His, Cys and Gln.. Functionally, probably plays an important role in intracellular peptide degradation. The sequence is that of Peptidase B from Escherichia coli (strain K12 / MC4100 / BW2952).